The primary structure comprises 215 residues: Protein LURP-one-related 4 (215 aa).

Belongs to the LOR family.

In terms of biological role, might be related to the phospholipid scramblase and tubby-like superfamily of membrane tethered transcription factors. The sequence is that of Protein LURP-one-related 4 from Arabidopsis thaliana (Mouse-ear cress).